The sequence spans 901 residues: Protein translocase subunit SecA (901 aa).

ATP contacts are provided by residues Q87, 105–109 (GEGKT), and D512. The disordered stretch occupies residues 859 to 901 (HQDDDSAAAAALAAQTGERKVGRNDPCPCGSGKKYKQCHGRLQ). Zn(2+) is bound by residues C885, C887, C896, and H897. Residues 891-901 (KKYKQCHGRLQ) show a composition bias toward basic residues.

It belongs to the SecA family. In terms of assembly, monomer and homodimer. Part of the essential Sec protein translocation apparatus which comprises SecA, SecYEG and auxiliary proteins SecDF-YajC and YidC. The cofactor is Zn(2+).

Its subcellular location is the cell inner membrane. The protein localises to the cytoplasm. It catalyses the reaction ATP + H2O + cellular proteinSide 1 = ADP + phosphate + cellular proteinSide 2.. Part of the Sec protein translocase complex. Interacts with the SecYEG preprotein conducting channel. Has a central role in coupling the hydrolysis of ATP to the transfer of proteins into and across the cell membrane, serving both as a receptor for the preprotein-SecB complex and as an ATP-driven molecular motor driving the stepwise translocation of polypeptide chains across the membrane. The polypeptide is Protein translocase subunit SecA (Escherichia coli O157:H7).